A 214-amino-acid polypeptide reads, in one-letter code: SH3 domain-binding glutamic acid-rich protein (214 aa).

The SH3-binding motif lies at 61-67 (NGIPLPP). The segment at 101 to 214 (PGSKVTKSEE…EEEAGEGEDS (114 aa)) is disordered. Residues 129 to 144 (GTEKAEKSGENEAQKE) are compositionally biased toward basic and acidic residues. 2 stretches are compositionally biased toward acidic residues: residues 162-192 (EGEDGEEGEEGEEREEGGEGETTGETEEAPE) and 198-214 (EAEEEEPEEEAGEGEDS).

It belongs to the SH3BGR family.

The protein is SH3 domain-binding glutamic acid-rich protein (Sh3bgr) of Mus musculus (Mouse).